Here is a 99-residue protein sequence, read N- to C-terminus: DNA-directed RNA polymerase subunit omega (99 aa).

This sequence belongs to the RNA polymerase subunit omega family. As to quaternary structure, the RNAP catalytic core consists of 2 alpha, 1 beta, 1 beta' and 1 omega subunit. When a sigma factor is associated with the core the holoenzyme is formed, which can initiate transcription.

It carries out the reaction RNA(n) + a ribonucleoside 5'-triphosphate = RNA(n+1) + diphosphate. Promotes RNA polymerase assembly. Latches the N- and C-terminal regions of the beta' subunit thereby facilitating its interaction with the beta and alpha subunits. The chain is DNA-directed RNA polymerase subunit omega from Xanthomonas oryzae pv. oryzae (strain MAFF 311018).